Here is a 101-residue protein sequence, read N- to C-terminus: Large ribosomal subunit protein uL23 (101 aa).

The protein belongs to the universal ribosomal protein uL23 family. Part of the 50S ribosomal subunit. Contacts protein L29, and trigger factor when it is bound to the ribosome.

One of the early assembly proteins it binds 23S rRNA. One of the proteins that surrounds the polypeptide exit tunnel on the outside of the ribosome. Forms the main docking site for trigger factor binding to the ribosome. The polypeptide is Large ribosomal subunit protein uL23 (Corynebacterium glutamicum (strain R)).